The primary structure comprises 430 residues: Dihydroorotase (430 aa).

His-60 and His-62 together coordinate Zn(2+). Substrate contacts are provided by residues 62–64 (HFR) and Asn-94. Positions 151, 178, and 231 each coordinate Zn(2+). Asn-277 serves as a coordination point for substrate. Asp-304 contributes to the Zn(2+) binding site. Residue Asp-304 is part of the active site. Residues His-308 and 322-323 (FG) contribute to the substrate site.

The protein belongs to the metallo-dependent hydrolases superfamily. DHOase family. Class I DHOase subfamily. Requires Zn(2+) as cofactor.

The enzyme catalyses (S)-dihydroorotate + H2O = N-carbamoyl-L-aspartate + H(+). Its pathway is pyrimidine metabolism; UMP biosynthesis via de novo pathway; (S)-dihydroorotate from bicarbonate: step 3/3. In terms of biological role, catalyzes the reversible cyclization of carbamoyl aspartate to dihydroorotate. The sequence is that of Dihydroorotase from Carboxydothermus hydrogenoformans (strain ATCC BAA-161 / DSM 6008 / Z-2901).